Consider the following 588-residue polypeptide: 3-methylmercaptopropionyl-CoA dehydrogenase (588 aa).

E435 serves as the catalytic Proton acceptor.

This sequence belongs to the acyl-CoA dehydrogenase family. It depends on FAD as a cofactor.

It carries out the reaction 3-(methylsulfanyl)propanoyl-CoA + oxidized [electron-transfer flavoprotein] + H(+) = 3-(methylsulfanyl)acryloyl-CoA + reduced [electron-transfer flavoprotein]. In terms of biological role, involved in the assimilation of dimethylsulphoniopropionate (DMSP), an important compound in the fixation of carbon in marine phytoplankton, by mediating the conversion of 3-(methylthio)propanoyl-CoA (MMPA-CoA) to 3-(methylthio)acryloyl-CoA (MTA-CoA). This is 3-methylmercaptopropionyl-CoA dehydrogenase from Ruegeria pomeroyi (strain ATCC 700808 / DSM 15171 / DSS-3) (Silicibacter pomeroyi).